The following is a 174-amino-acid chain: Small ribosomal subunit protein uS5 (174 aa).

Positions 19 to 82 (LREKMVAINR…DEARRKMVKV (64 aa)) constitute an S5 DRBM domain.

It belongs to the universal ribosomal protein uS5 family. In terms of assembly, part of the 30S ribosomal subunit. Contacts proteins S4 and S8.

With S4 and S12 plays an important role in translational accuracy. Its function is as follows. Located at the back of the 30S subunit body where it stabilizes the conformation of the head with respect to the body. This is Small ribosomal subunit protein uS5 from Azoarcus sp. (strain BH72).